Consider the following 617-residue polypeptide: Dihydroxy-acid dehydratase (617 aa).

Aspartate 81 serves as a coordination point for Mg(2+). Cysteine 122 contacts [2Fe-2S] cluster. 2 residues coordinate Mg(2+): aspartate 123 and lysine 124. At lysine 124 the chain carries N6-carboxylysine. Cysteine 195 contributes to the [2Fe-2S] cluster binding site. Residue glutamate 492 participates in Mg(2+) binding. The Proton acceptor role is filled by serine 518.

Belongs to the IlvD/Edd family. In terms of assembly, homodimer. The cofactor is [2Fe-2S] cluster. Requires Mg(2+) as cofactor.

The catalysed reaction is (2R)-2,3-dihydroxy-3-methylbutanoate = 3-methyl-2-oxobutanoate + H2O. The enzyme catalyses (2R,3R)-2,3-dihydroxy-3-methylpentanoate = (S)-3-methyl-2-oxopentanoate + H2O. It participates in amino-acid biosynthesis; L-isoleucine biosynthesis; L-isoleucine from 2-oxobutanoate: step 3/4. It functions in the pathway amino-acid biosynthesis; L-valine biosynthesis; L-valine from pyruvate: step 3/4. Functionally, functions in the biosynthesis of branched-chain amino acids. Catalyzes the dehydration of (2R,3R)-2,3-dihydroxy-3-methylpentanoate (2,3-dihydroxy-3-methylvalerate) into 2-oxo-3-methylpentanoate (2-oxo-3-methylvalerate) and of (2R)-2,3-dihydroxy-3-methylbutanoate (2,3-dihydroxyisovalerate) into 2-oxo-3-methylbutanoate (2-oxoisovalerate), the penultimate precursor to L-isoleucine and L-valine, respectively. The protein is Dihydroxy-acid dehydratase of Buchnera aphidicola subsp. Cinara cedri (strain Cc).